The chain runs to 275 residues: Secreted RxLR effector protein 153 (275 aa).

The first 27 residues, 1–27 (MRNRAFLFGLFFIEYACLVLFAAPTRA), serve as a signal peptide directing secretion. N45 carries an N-linked (GlcNAc...) asparagine glycan. Residues 48 to 63 (RTLQADDSKRISAEER) carry the RxLR-dEER motif.

Belongs to the RxLR effector family.

The protein localises to the secreted. It localises to the host cell membrane. Its function is as follows. Secreted effector that completely suppresses the host cell death induced by cell death-inducing proteins. The sequence is that of Secreted RxLR effector protein 153 from Plasmopara viticola (Downy mildew of grapevine).